Reading from the N-terminus, the 210-residue chain is Na(+)-translocating NADH-quinone reductase subunit D (210 aa).

A run of 6 helical transmembrane segments spans residues 42 to 62 (VVMT…ISTI), 66 to 86 (IPNS…VIVV), 103 to 123 (VYVG…AFAM), 131 to 151 (FMDG…VGAF), 154 to 174 (LFGS…NGGW), and 178 to 198 (NGLL…IWAV).

This sequence belongs to the NqrDE/RnfAE family. As to quaternary structure, composed of six subunits; NqrA, NqrB, NqrC, NqrD, NqrE and NqrF.

Its subcellular location is the cell inner membrane. It carries out the reaction a ubiquinone + n Na(+)(in) + NADH + H(+) = a ubiquinol + n Na(+)(out) + NAD(+). NQR complex catalyzes the reduction of ubiquinone-1 to ubiquinol by two successive reactions, coupled with the transport of Na(+) ions from the cytoplasm to the periplasm. NqrA to NqrE are probably involved in the second step, the conversion of ubisemiquinone to ubiquinol. In Psychromonas ingrahamii (strain DSM 17664 / CCUG 51855 / 37), this protein is Na(+)-translocating NADH-quinone reductase subunit D.